The following is a 231-amino-acid chain: NADH-ubiquinone oxidoreductase chain 4 (231 aa).

Helical transmembrane passes span 1-21, 34-54, 63-85, 89-111, 128-148, and 156-176; these read PIAG…YGII, MFLP…LTCL, IAYS…TPWG, AMAL…NTTY, ILPM…ATPP, and LLIM…LGLS.

The protein belongs to the complex I subunit 4 family.

The protein resides in the mitochondrion membrane. It catalyses the reaction a ubiquinone + NADH + 5 H(+)(in) = a ubiquinol + NAD(+) + 4 H(+)(out). Its function is as follows. Core subunit of the mitochondrial membrane respiratory chain NADH dehydrogenase (Complex I) that is believed to belong to the minimal assembly required for catalysis. Complex I functions in the transfer of electrons from NADH to the respiratory chain. The immediate electron acceptor for the enzyme is believed to be ubiquinone. In Trimeresurus stejnegeri (Chinese green tree viper), this protein is NADH-ubiquinone oxidoreductase chain 4 (MT-ND4).